A 328-amino-acid polypeptide reads, in one-letter code: NADH-quinone oxidoreductase subunit H (328 aa).

8 consecutive transmembrane segments (helical) span residues 8–28 (VAAI…AVGA), 81–101 (GLFV…FMVI), 114–134 (IGLL…LFAG), 154–174 (LSYE…AGSF), 186–206 (LWFI…GIAV), 237–257 (FFVG…TLFL), 265–285 (LPPI…FILL), and 304–324 (VCLP…LIFS).

It belongs to the complex I subunit 1 family. In terms of assembly, NDH-1 is composed of 14 different subunits. Subunits NuoA, H, J, K, L, M, N constitute the membrane sector of the complex.

Its subcellular location is the cell inner membrane. It carries out the reaction a quinone + NADH + 5 H(+)(in) = a quinol + NAD(+) + 4 H(+)(out). In terms of biological role, NDH-1 shuttles electrons from NADH, via FMN and iron-sulfur (Fe-S) centers, to quinones in the respiratory chain. The immediate electron acceptor for the enzyme in this species is believed to be ubiquinone. Couples the redox reaction to proton translocation (for every two electrons transferred, four hydrogen ions are translocated across the cytoplasmic membrane), and thus conserves the redox energy in a proton gradient. This subunit may bind ubiquinone. The chain is NADH-quinone oxidoreductase subunit H from Chromohalobacter salexigens (strain ATCC BAA-138 / DSM 3043 / CIP 106854 / NCIMB 13768 / 1H11).